The sequence spans 217 residues: ATP phosphoribosyltransferase (217 aa).

It belongs to the ATP phosphoribosyltransferase family. Short subfamily. In terms of assembly, heteromultimer composed of HisG and HisZ subunits.

It localises to the cytoplasm. The catalysed reaction is 1-(5-phospho-beta-D-ribosyl)-ATP + diphosphate = 5-phospho-alpha-D-ribose 1-diphosphate + ATP. Its pathway is amino-acid biosynthesis; L-histidine biosynthesis; L-histidine from 5-phospho-alpha-D-ribose 1-diphosphate: step 1/9. In terms of biological role, catalyzes the condensation of ATP and 5-phosphoribose 1-diphosphate to form N'-(5'-phosphoribosyl)-ATP (PR-ATP). Has a crucial role in the pathway because the rate of histidine biosynthesis seems to be controlled primarily by regulation of HisG enzymatic activity. The chain is ATP phosphoribosyltransferase (hisG) from Neisseria meningitidis serogroup A / serotype 4A (strain DSM 15465 / Z2491).